Reading from the N-terminus, the 82-residue chain is Putative defensin-like protein 134 (82 aa).

A signal peptide spans 1–26 (MEVRSLNLCFLLVLVLLMSPAPTAVA). Intrachain disulfides connect Cys32–Cys79, Cys42–Cys68, Cys47–Cys74, and Cys51–Cys76.

This sequence belongs to the DEFL family.

Its subcellular location is the secreted. In Arabidopsis thaliana (Mouse-ear cress), this protein is Putative defensin-like protein 134.